We begin with the raw amino-acid sequence, 1457 residues long: DNA-directed RNA polymerase III subunit RPC1 (1457 aa).

Positions 67, 70, 77, 80, 107, 110, and 154 each coordinate Zn(2+). Asp508, Asp510, and Asp512 together coordinate Mg(2+). Residues Pro854 to Glu866 are bridging helix.

This sequence belongs to the RNA polymerase beta' chain family. Component of the RNA polymerase III (Pol III) complex consisting of 17 subunits.

It is found in the nucleus. It catalyses the reaction RNA(n) + a ribonucleoside 5'-triphosphate = RNA(n+1) + diphosphate. DNA-dependent RNA polymerase catalyzes the transcription of DNA into RNA using the four ribonucleoside triphosphates as substrates. Largest and catalytic core component of RNA polymerase III which synthesizes small RNAs, such as 5S rRNA and tRNAs. Forms the polymerase active center together with the second largest subunit. A single-stranded DNA template strand of the promoter is positioned within the central active site cleft of Pol III. A bridging helix emanates from RPC1 and crosses the cleft near the catalytic site and is thought to promote translocation of Pol III by acting as a ratchet that moves the RNA-DNA hybrid through the active site by switching from straight to bent conformations at each step of nucleotide addition. The protein is DNA-directed RNA polymerase III subunit RPC1 (RPC1) of Debaryomyces hansenii (strain ATCC 36239 / CBS 767 / BCRC 21394 / JCM 1990 / NBRC 0083 / IGC 2968) (Yeast).